Reading from the N-terminus, the 81-residue chain is Cytotoxin 1c (81 aa).

An N-terminal signal peptide occupies residues 1 to 21; it reads MKTLLLTLVVVTIVCLDLGYT. Disulfide bonds link Cys-24–Cys-42, Cys-35–Cys-59, Cys-63–Cys-74, and Cys-75–Cys-80.

Belongs to the three-finger toxin family. Short-chain subfamily. Type IA cytotoxin sub-subfamily. Monomer in solution; Homodimer and oligomer in the presence of negatively charged lipids forming a pore with a size ranging between 20 and 30 Angstroms. As to expression, expressed by the venom gland.

It is found in the secreted. The protein resides in the target cell membrane. Shows cytolytic activity on many different cells by forming pore in lipid membranes. In vivo, increases heart rate or kills the animal by cardiac arrest. In addition, it binds to heparin with high affinity, interacts with Kv channel-interacting protein 1 (KCNIP1) in a calcium-independent manner, and binds to integrin alpha-V/beta-3 (ITGAV/ITGB3) with moderate affinity. The sequence is that of Cytotoxin 1c from Naja atra (Chinese cobra).